Reading from the N-terminus, the 264-residue chain is 3'-5' ssDNA/RNA exonuclease TatD (264 aa).

A divalent metal cation contacts are provided by glutamate 92, histidine 128, and histidine 153.

Belongs to the metallo-dependent hydrolases superfamily. TatD-type hydrolase family. TatD subfamily. In terms of assembly, monomer. Mg(2+) serves as cofactor.

It is found in the cytoplasm. In terms of biological role, 3'-5' exonuclease that prefers single-stranded DNA and RNA. May play a role in the H(2)O(2)-induced DNA damage repair. The sequence is that of 3'-5' ssDNA/RNA exonuclease TatD from Musicola paradisiaca (strain Ech703) (Dickeya paradisiaca).